A 34-amino-acid polypeptide reads, in one-letter code: Potassium channel toxin alpha-KTx 6.13 (34 aa).

4 disulfides stabilise this stretch: Cys3-Cys24, Cys9-Cys29, Cys13-Cys31, and Cys19-Cys34. Cys34 carries the post-translational modification Cysteine amide.

The protein belongs to the short scorpion toxin superfamily. Potassium channel inhibitor family. Alpha-KTx 06 subfamily. In terms of tissue distribution, expressed by the venom gland.

The protein localises to the secreted. Antagonist of Kv1/KCNA potassium channels. Shows a weak interaction with muscle-type nicotinic acetylcholine receptors (nAChR), since it inhibits alpha-bungarotoxin binding to both muscle-type nAChR from T.californica (IC(50)=490 nM). This suggests it probably weakly inhibits nAChR. The polypeptide is Potassium channel toxin alpha-KTx 6.13 (Heterometrus spinifer (Asia giant forest scorpion)).